The sequence spans 348 residues: Anthranilate phosphoribosyltransferase (348 aa).

Residues glycine 81, 84 to 85 (GD), threonine 89, 91 to 94 (NIST), 109 to 117 (KHGNRSSSG), and serine 121 each bind 5-phospho-alpha-D-ribose 1-diphosphate. Glycine 81 contacts anthranilate. Serine 93 contributes to the Mg(2+) binding site. Asparagine 112 lines the anthranilate pocket. Residue arginine 167 coordinates anthranilate. Residues aspartate 226 and glutamate 227 each coordinate Mg(2+).

Belongs to the anthranilate phosphoribosyltransferase family. In terms of assembly, homodimer. Mg(2+) is required as a cofactor.

It catalyses the reaction N-(5-phospho-beta-D-ribosyl)anthranilate + diphosphate = 5-phospho-alpha-D-ribose 1-diphosphate + anthranilate. Its pathway is amino-acid biosynthesis; L-tryptophan biosynthesis; L-tryptophan from chorismate: step 2/5. Functionally, catalyzes the transfer of the phosphoribosyl group of 5-phosphorylribose-1-pyrophosphate (PRPP) to anthranilate to yield N-(5'-phosphoribosyl)-anthranilate (PRA). This is Anthranilate phosphoribosyltransferase from Nitrosopumilus maritimus (strain SCM1).